Here is a 472-residue protein sequence, read N- to C-terminus: Methanethiol oxidase (472 aa).

This sequence belongs to the selenium-binding protein family.

The protein localises to the nucleus. It is found in the cytoplasm. The protein resides in the cytosol. It localises to the membrane. It catalyses the reaction methanethiol + O2 + H2O = hydrogen sulfide + formaldehyde + H2O2 + H(+). It participates in organosulfur degradation. Catalyzes the oxidation of methanethiol, an organosulfur compound known to be produced in substantial amounts by gut bacteria. Selenium-binding protein which may be involved in the sensing of reactive xenobiotics in the cytoplasm. May be involved in intra-Golgi protein transport. This is Methanethiol oxidase (selenbp1-b) from Xenopus laevis (African clawed frog).